A 164-amino-acid polypeptide reads, in one-letter code: Peptidyl-prolyl cis-trans isomerase A-like 4D (164 aa).

Residues 7–163 (FFEITRDGKP…KKITIADCGQ (157 aa)) form the PPIase cyclophilin-type domain.

Belongs to the cyclophilin-type PPIase family. PPIase A subfamily.

It localises to the cytoplasm. The enzyme catalyses [protein]-peptidylproline (omega=180) = [protein]-peptidylproline (omega=0). In terms of biological role, PPIases accelerate the folding of proteins. It catalyzes the cis-trans isomerization of proline imidic peptide bonds in oligopeptides. In Homo sapiens (Human), this protein is Peptidyl-prolyl cis-trans isomerase A-like 4D.